The sequence spans 268 residues: Zinc transporter ZupT (268 aa).

Helical transmembrane passes span 6-26, 37-57, 70-90, 125-145, and 152-172; these read LAFL…LIAF, SFAL…DIFF, TQGY…IGFI, GLFT…ATFV, and SIGL…GIAV. Positions 136 and 139 each coordinate Fe(2+). Residues Glu-139 and His-164 each coordinate Zn(2+). Residues Asn-165, Glu-168, and Glu-197 each contribute to the Fe(2+) site. Residue Glu-168 coordinates Zn(2+). 2 helical membrane passes run 201–221 and 248–268; these read AIVA…GIIF and MSMY…LLLA.

It belongs to the ZIP transporter (TC 2.A.5) family. ZupT subfamily.

Its subcellular location is the cell membrane. The catalysed reaction is Zn(2+)(in) = Zn(2+)(out). Its function is as follows. Mediates zinc uptake. May also transport other divalent cations. The protein is Zinc transporter ZupT of Oceanobacillus iheyensis (strain DSM 14371 / CIP 107618 / JCM 11309 / KCTC 3954 / HTE831).